The following is a 304-amino-acid chain: N-acetylmuramic acid 6-phosphate etherase (304 aa).

Positions isoleucine 62–lysine 225 constitute an SIS domain. Catalysis depends on glutamate 90, which acts as the Proton donor. The active site involves glutamate 121.

Belongs to the GCKR-like family. MurNAc-6-P etherase subfamily. In terms of assembly, homodimer.

The catalysed reaction is N-acetyl-D-muramate 6-phosphate + H2O = N-acetyl-D-glucosamine 6-phosphate + (R)-lactate. It participates in amino-sugar metabolism; 1,6-anhydro-N-acetylmuramate degradation. It functions in the pathway amino-sugar metabolism; N-acetylmuramate degradation. Its pathway is cell wall biogenesis; peptidoglycan recycling. Its function is as follows. Specifically catalyzes the cleavage of the D-lactyl ether substituent of MurNAc 6-phosphate, producing GlcNAc 6-phosphate and D-lactate. Together with AnmK, is also required for the utilization of anhydro-N-acetylmuramic acid (anhMurNAc) either imported from the medium or derived from its own cell wall murein, and thus plays a role in cell wall recycling. The chain is N-acetylmuramic acid 6-phosphate etherase from Actinobacillus pleuropneumoniae serotype 7 (strain AP76).